We begin with the raw amino-acid sequence, 60 residues long: uncharacterized protein (60 aa).

This is an uncharacterized protein from Bacillus subtilis (strain 168).